The following is a 180-amino-acid chain: UPF0149 protein XCV3523 (180 aa).

The protein belongs to the UPF0149 family.

This Xanthomonas euvesicatoria pv. vesicatoria (strain 85-10) (Xanthomonas campestris pv. vesicatoria) protein is UPF0149 protein XCV3523.